A 677-amino-acid chain; its full sequence is Membrane-associated tyrosine- and threonine-specific cdc2-inhibitory kinase wee-1.3 (677 aa).

The span at 1–22 (MDDTEGNSSMDSIRNGQSSPLP) shows a compositional bias: polar residues. Residues 1–30 (MDDTEGNSSMDSIRNGQSSPLPQVTPRLPQ) form a disordered region. The Protein kinase domain maps to 108–355 (FQIDEIIGRG…SRDLLDHPVI (248 aa)). Residues 114–122 (IGRGSFGEV) and Lys137 each bind ATP. The Proton acceptor role is filled by Asp228. The Mg(2+) site is built by Asn233 and Asp246. Disordered stretches follow at residues 478–526 (FDND…GTPR) and 632–677 (EPSN…GDEV). A compositionally biased stretch (polar residues) spans 489–499 (ATCSSSNSSAI). The segment covering 638 to 652 (TVDHHTILEQSESPR) has biased composition (basic and acidic residues).

This sequence belongs to the protein kinase superfamily. Ser/Thr protein kinase family. WEE1 subfamily.

Its subcellular location is the golgi apparatus membrane. It localises to the cytoplasm. The enzyme catalyses L-seryl-[protein] + ATP = O-phospho-L-seryl-[protein] + ADP + H(+). It carries out the reaction L-threonyl-[protein] + ATP = O-phospho-L-threonyl-[protein] + ADP + H(+). In terms of biological role, acts as a negative regulator of entry into mitosis (G2 to M transition) by phosphorylation of the CDK1 kinase during oocyte maturation. Required for oocyte maturation, embryonic development, germline proliferation and initiation of meiosis during spermatogenesis. Required for chromosome structure during mitosis and negative regulation of nuclear envelope breakdown. The sequence is that of Membrane-associated tyrosine- and threonine-specific cdc2-inhibitory kinase wee-1.3 (wee-1.3) from Caenorhabditis elegans.